Here is a 99-residue protein sequence, read N- to C-terminus: Aspartyl/glutamyl-tRNA(Asn/Gln) amidotransferase subunit C (99 aa).

This sequence belongs to the GatC family. Heterotrimer of A, B and C subunits.

It carries out the reaction L-glutamyl-tRNA(Gln) + L-glutamine + ATP + H2O = L-glutaminyl-tRNA(Gln) + L-glutamate + ADP + phosphate + H(+). The enzyme catalyses L-aspartyl-tRNA(Asn) + L-glutamine + ATP + H2O = L-asparaginyl-tRNA(Asn) + L-glutamate + ADP + phosphate + 2 H(+). Its function is as follows. Allows the formation of correctly charged Asn-tRNA(Asn) or Gln-tRNA(Gln) through the transamidation of misacylated Asp-tRNA(Asn) or Glu-tRNA(Gln) in organisms which lack either or both of asparaginyl-tRNA or glutaminyl-tRNA synthetases. The reaction takes place in the presence of glutamine and ATP through an activated phospho-Asp-tRNA(Asn) or phospho-Glu-tRNA(Gln). This chain is Aspartyl/glutamyl-tRNA(Asn/Gln) amidotransferase subunit C, found in Paracidovorax citrulli (strain AAC00-1) (Acidovorax citrulli).